A 496-amino-acid chain; its full sequence is Lysine--tRNA ligase (496 aa).

Glu-408 and Glu-415 together coordinate Mg(2+).

The protein belongs to the class-II aminoacyl-tRNA synthetase family. As to quaternary structure, homodimer. It depends on Mg(2+) as a cofactor.

It localises to the cytoplasm. The enzyme catalyses tRNA(Lys) + L-lysine + ATP = L-lysyl-tRNA(Lys) + AMP + diphosphate. In Legionella pneumophila (strain Lens), this protein is Lysine--tRNA ligase.